The sequence spans 2060 residues: Unconventional myosin-X (2060 aa).

Methionine 1 bears the N-acetylmethionine mark. The region spanning 63–739 is the Myosin motor domain; the sequence is EGVDDMASLT…LEQKLEKRRE (677 aa). Residues asparagine 104, tyrosine 113, 160 to 165, and asparagine 215 each bind ATP; that span reads GAGKTE. Positions 619–641 are actin-binding; the sequence is LHSLMATLSSSNPFFVRCIKPNT. IQ domains are found at residues 742–771, 765–794, and 788–817; these read IDRAAMVIRAHILGYLARKQYRKVLCGVVT, VLCGVVTIQKNYRAFLARKRFLHLKKAAIV, and LKKAAIVFQKQLRGRLARKVYRQLLAEKRE. The segment at 814–882 is SAH; it reads EKRELEERKR…LTRELEKQRE (69 aa). Residues 883-933 are a coiled coil; sequence NKQVEEILRLEKEIEDLQRMKEQQELSLTEASLQKLQQLRDEELRRLEDEA. Residues serine 961, serine 964, and serine 967 each carry the phosphoserine modification. 2 disordered regions span residues 971–1039 and 1064–1088; these read SELA…PYMN and SLHNSSSGESTYCMPQNNGDLPSPD. The span at 991–1005 shows a compositional bias: acidic residues; it reads PEEEVDEGFEADDDA. Positions 1064–1083 are enriched in polar residues; the sequence is SLHNSSSGESTYCMPQNNGD. Threonine 1160 is subject to Phosphothreonine. PH domains lie at 1214–1312 and 1394–1499; these read EALK…QVHS and EFIV…NVTD. Residues 1549 to 1697 enclose the MyTH4 domain; the sequence is LPYGDINLNL…PSRDEIEALI (149 aa). The FERM domain maps to 1702–2046; the sequence is MTSTVYCHGG…AYISMIVKKR (345 aa).

It belongs to the TRAFAC class myosin-kinesin ATPase superfamily. Myosin family. Monomer, when in an inactive conformation in the cytosol. Homodimer in its active, membrane-bound conformation; antiparallel coiled coil-mediated dimer formation. Interacts with ECPAS. Interacts with DCC and ITGB5; the presence of DCC inhibits ITGB5 binding. Interacts with tubulin; ITGB5 or DCC binding inhibits tubulin binding. Interacts strongly with CALM3 and weakly with CALM, the CALM3 interaction is essential for function in filopodial extension and motility. Interacts with ITGB1, ITGB3 and ITGB5. Interacts with NEO1. Interacts with VASP.

The protein resides in the cytoplasm. It localises to the cytosol. The protein localises to the cell projection. Its subcellular location is the lamellipodium. It is found in the ruffle. The protein resides in the cytoskeleton. It localises to the filopodium tip. The protein localises to the cell cortex. Its subcellular location is the filopodium membrane. It is found in the cell membrane. In terms of biological role, myosins are actin-based motor molecules with ATPase activity. Unconventional myosins serve in intracellular movements. MYO10 binds to actin filaments and actin bundles and functions as a plus end-directed motor. Moves with higher velocity and takes larger steps on actin bundles than on single actin filaments. The tail domain binds to membranous compartments containing phosphatidylinositol 3,4,5-trisphosphate or integrins, and mediates cargo transport along actin filaments. Regulates cell shape, cell spreading and cell adhesion. Stimulates the formation and elongation of filopodia. In hippocampal neurons it induces the formation of dendritic filopodia by trafficking the actin-remodeling protein VASP to the tips of filopodia, where it promotes actin elongation. Plays a role in formation of the podosome belt in osteoclasts. The sequence is that of Unconventional myosin-X (Myo10) from Rattus norvegicus (Rat).